The following is a 38-amino-acid chain: Potassium channel toxin alpha-KTx 6.4 (38 aa).

4 cysteine pairs are disulfide-bonded: C6–C27, C12–C32, C16–C34, and C22–C37.

The protein belongs to the short scorpion toxin superfamily. Potassium channel inhibitor family. Alpha-KTx 06 subfamily. In terms of tissue distribution, expressed by the venom gland.

It is found in the secreted. In terms of biological role, potently, completely and reversibly blocks voltage-gated potassium channel Kv1.2/KCNA2 and Shaker B (Sh). Also blocks small conductance (SK) calcium-activated potassium channel (KCNN). The protein is Potassium channel toxin alpha-KTx 6.4 of Pandinus imperator (Emperor scorpion).